We begin with the raw amino-acid sequence, 372 residues long: NAD(P)H-quinone oxidoreductase subunit 1 (372 aa).

Transmembrane regions (helical) follow at residues 31–51, 65–85, 97–117, 128–148, 176–196, 254–276, 304–324, and 347–367; these read PLPMLIMLLAATVSVLVVVWL, PEFIGPLGVLAPLADGLKLVL, LLFTLGPAIVVIPVFLSYLIL, VGLGIFLWIALSSVVPIGLLM, LALSVLAVVMMSNSLSTVDIV, FALFYLGSYVNLTLSALLFAVLY, LIFATIGIGMTLLKAYFLIFL, and FLLPVSLVNLLITAGLKLAFP.

Belongs to the complex I subunit 1 family. NDH-1 is composed of at least 11 different subunits.

The protein resides in the cellular thylakoid membrane. The catalysed reaction is a plastoquinone + NADH + (n+1) H(+)(in) = a plastoquinol + NAD(+) + n H(+)(out). It catalyses the reaction a plastoquinone + NADPH + (n+1) H(+)(in) = a plastoquinol + NADP(+) + n H(+)(out). In terms of biological role, NDH-1 shuttles electrons from an unknown electron donor, via FMN and iron-sulfur (Fe-S) centers, to quinones in the respiratory and/or the photosynthetic chain. The immediate electron acceptor for the enzyme in this species is believed to be plastoquinone. Couples the redox reaction to proton translocation, and thus conserves the redox energy in a proton gradient. This is NAD(P)H-quinone oxidoreductase subunit 1 from Leptolyngbya boryana (Plectonema boryanum).